The primary structure comprises 326 residues: MSIEIFLVLVVALIIDRLVGDPDWLWERLTHPVVFFGKAIGVFDEALNRGADGGWLKMRGVATILILLAASILLGVVLNRLFDVLGAVGFILEAITVAVFLAQKSLADHVRRVADGLRSNGLEGGREAVSMIVGRDPKTLDEPGVCRAAIESLAENFSDGVVAPALWYAVAGLPGLLAYKMLNTADSMIGHKSPKYLHFGWASARLDDLANLPAARLSVFLIAAGARFKRGVEAAKAAIDVAKRDHGFHRSPNSGWPEAAMAGALDIQLAGPRVYGGVTVDEPMINGAGRAIATADDIDAAVAVFYRACTTLAAASAVLVLPFLLL.

A run of 4 helical transmembrane segments spans residues 58–78, 81–101, 157–177, and 304–324; these read MRGV…GVVL, LFDV…AVFL, FSDG…PGLL, and VFYR…LPFL.

The protein belongs to the CobD/CbiB family.

It is found in the cell membrane. It functions in the pathway cofactor biosynthesis; adenosylcobalamin biosynthesis. Functionally, converts cobyric acid to cobinamide by the addition of aminopropanol on the F carboxylic group. This is Cobalamin biosynthesis protein CobD from Sinorhizobium fredii (strain NBRC 101917 / NGR234).